The sequence spans 148 residues: Urease accessory protein UreE (148 aa).

It belongs to the UreE family.

It localises to the cytoplasm. Involved in urease metallocenter assembly. Binds nickel. Probably functions as a nickel donor during metallocenter assembly. The polypeptide is Urease accessory protein UreE (Geobacillus kaustophilus (strain HTA426)).